Here is a 238-residue protein sequence, read N- to C-terminus: tRNA1(Val) (adenine(37)-N6)-methyltransferase (238 aa).

Belongs to the methyltransferase superfamily. tRNA (adenine-N(6)-)-methyltransferase family.

It localises to the cytoplasm. The catalysed reaction is adenosine(37) in tRNA1(Val) + S-adenosyl-L-methionine = N(6)-methyladenosine(37) in tRNA1(Val) + S-adenosyl-L-homocysteine + H(+). Its function is as follows. Specifically methylates the adenine in position 37 of tRNA(1)(Val) (anticodon cmo5UAC). The sequence is that of tRNA1(Val) (adenine(37)-N6)-methyltransferase from Cytophaga hutchinsonii (strain ATCC 33406 / DSM 1761 / CIP 103989 / NBRC 15051 / NCIMB 9469 / D465).